Reading from the N-terminus, the 268-residue chain is Glutamine amidotransferase-like class 1 domain-containing protein 3, mitochondrial (268 aa).

Residues 1-41 (MAAVRVLVASRLAAASAFTSLSPGGRTPSQRAALHLSVPRP) constitute a mitochondrion transit peptide. Residues K151, K157, and K164 each carry the N6-acetyllysine modification. An N6-acetyllysine; alternate modification is found at K203. N6-succinyllysine; alternate is present on K203. Residue K219 is modified to N6-acetyllysine. 2 positions are modified to N6-acetyllysine; alternate: K223 and K233. Residues K223 and K233 each carry the N6-succinyllysine; alternate modification.

Belongs to the GATD3 family.

The protein localises to the mitochondrion. The protein is Glutamine amidotransferase-like class 1 domain-containing protein 3, mitochondrial of Homo sapiens (Human).